The following is a 57-amino-acid chain: UPF0391 membrane protein bsl6560 (57 aa).

A run of 2 helical transmembrane segments spans residues 4-24 (WVVTFLVIALIAGILGFGGIA) and 30-50 (IAKIIFFIAVVLFLVSAVVGL).

Belongs to the UPF0391 family.

It is found in the cell membrane. This Bradyrhizobium diazoefficiens (strain JCM 10833 / BCRC 13528 / IAM 13628 / NBRC 14792 / USDA 110) protein is UPF0391 membrane protein bsl6560.